A 134-amino-acid polypeptide reads, in one-letter code: D-dopachrome decarboxylase-like protein (134 aa).

It belongs to the MIF family.

The protein localises to the cytoplasm. Functionally, may have lyase activity. This Homo sapiens (Human) protein is D-dopachrome decarboxylase-like protein (DDTL).